The following is a 309-amino-acid chain: DnaJ homolog subfamily B member 7 (309 aa).

In terms of domain architecture, J spans Asp-3–Gly-69. The disordered stretch occupies residues Phe-282–Cys-309. Basic residues predominate over residues Gly-290–Cys-309.

Functionally, probably acts as a co-chaperone. In Homo sapiens (Human), this protein is DnaJ homolog subfamily B member 7 (DNAJB7).